Reading from the N-terminus, the 496-residue chain is Transmembrane protein 104 (496 aa).

The Cytoplasmic portion of the chain corresponds to 1 to 10 (MAGEITETGE). A helical membrane pass occupies residues 11 to 31 (LYSSYVGLVYMFNLIVGTGAL). The Extracellular segment spans residues 32–36 (TMPKA). Residues 37–57 (FATAGWLVSLVLLVFLGFMSF) form a helical membrane-spanning segment. Residues 58 to 146 (VTTTFVIEAM…SMFFNKVGVN (89 aa)) are Cytoplasmic-facing. Residues 147-167 (LFYFCIIVYLYGDLAIYAAAV) traverse the membrane as a helical segment. Topologically, residues 168–204 (PFSLMQVTCSATGNDSCGVEADTKYNDTDRCWGPLRR) are extracellular. Residue Asn193 is glycosylated (N-linked (GlcNAc...) asparagine). Residues 205-225 (VDAYRIYLAIFTLLLGPFTFF) form a helical membrane-spanning segment. Over 226–233 (DVQKTKYL) the chain is Cytoplasmic. A helical transmembrane segment spans residues 234–254 (QILTSLMRWIAFAVMIVLALI). The Extracellular portion of the chain corresponds to 255–276 (RIGHGQGEGHPPLADFSGVRNL). Residues 277-297 (FGVCVYSFMCQHSLPSLITPV) traverse the membrane as a helical segment. Topologically, residues 298 to 306 (SSKRHLTRL) are cytoplasmic. A helical transmembrane segment spans residues 307–327 (VFLDYVLILAFYGLLSFTAIF). Over 328–354 (CFRGDSLMDMYTLNFARCDVVGLAAVR) the chain is Extracellular. A helical transmembrane segment spans residues 355 to 375 (FFLGLFPVFTISTNFPIIAVT). Residues 376 to 397 (LRNNWKTLFHREGGTYPWVVDR) lie on the Cytoplasmic side of the membrane. The helical transmembrane segment at 398 to 418 (VVFPTITLVPPVLVAFCTHDL) threads the bilayer. The Extracellular portion of the chain corresponds to 419 to 421 (ESL). The helical transmembrane segment at 422-442 (VGITGAYAGTGIQYVIPAFLV) threads the bilayer. The Cytoplasmic segment spans residues 443-470 (YHCRRDTQLAFGCGVSNKHRSPFRHTFW). The chain crosses the membrane as a helical span at residues 471-491 (VGFVLLWAFSCFIFVTANIIL). Residues 492–496 (SETKL) are Extracellular-facing.

It belongs to the TMEM104 family.

The protein resides in the membrane. The chain is Transmembrane protein 104 (TMEM104) from Homo sapiens (Human).